The sequence spans 596 residues: Nuclear receptor subfamily 2 group C member 2 (596 aa).

A Phosphoserine; by MAPK modification is found at Ser-19. Phosphoserine is present on Ser-46. Residues Ser-55 and Ser-68 each carry the phosphoserine; by MAPK modification. Ser-98 carries the phosphoserine modification. Residues 114 to 189 constitute a DNA-binding region (nuclear receptor); it reads VEYCVVCGDK…MGMKMESVQS (76 aa). 2 consecutive NR C4-type zinc fingers follow at residues 117–137 and 153–177; these read CVVC…CEGC and CRSS…LKKC. Lys-192 is covalently cross-linked (Glycyl lysine isopeptide (Lys-Gly) (interchain with G-Cter in SUMO2)). Ser-219 carries the post-translational modification Phosphoserine. N6-acetyllysine is present on Lys-231. The NR LBD domain occupies 341 to 583; it reads GSIHVISRDQ…SIIPYILKME (243 aa).

The protein belongs to the nuclear hormone receptor family. NR2 subfamily. As to quaternary structure, homodimer; can bind DNA as homodimer. Heterodimer; binds DNA as a heterodimer with NR2C1 required for chromatin remodeling and for binding to promoter regions such as globin DR1 repeats. Interacts with NR2C2AP; the interaction represses selective NR2C2-mediated transcriptional activity. Interacts with PCAF; the interaction preferentially occurs on the non-phosphorylated form and induces NR2C2-mediated transactivation activity and does not require the ligand-binding domain. Interacts (MAPK-mediated phosphorylated form) with NRIP1; the interaction promotes repression of NR2C2-mediated activity. Interacts with NLRP10. Interacts (via ligand-binding region) with transcriptional corepressor JAZF1; the interaction promotes NR2C2-mediated transcriptional repression. Post-translationally, phosphorylation on Ser-19 and Ser-68 is an important regulator of NR2C2-mediated transcriptional activity. Phosphorylation on these residues recruits the corepressor, NRIP1, leading to transcripional repression, whereas the non-phosphorylated form preferentially recruits the coactivator, PCAF. As to expression, expressed in hepatocytes. Also expressed in granule cells of the hippocampus and the cerebellum.

The protein localises to the nucleus. Its function is as follows. Orphan nuclear receptor that can act as a repressor or activator of transcription. An important repressor of nuclear receptor signaling pathways such as retinoic acid receptor, retinoid X, vitamin D3 receptor, thyroid hormone receptor and estrogen receptor pathways. May regulate gene expression during the late phase of spermatogenesis. Activates transcriptional activity of LHCG and is antagonist of PPARA-mediated transactivation. Together with NR2C1, forms the core of the DRED (direct repeat erythroid-definitive) complex that represses embryonic and fetal globin transcription including that of GATA1. Binds to hormone response elements (HREs) consisting of two 5'-AGGTCA-3' half site direct repeat consensus sequences. Plays a fundamental role in early embryonic development and embryonic stem cells. Required for normal spermatogenesis and cerebellum development. Appears to be important for neurodevelopmentally regulated behavior. The chain is Nuclear receptor subfamily 2 group C member 2 (Nr2c2) from Rattus norvegicus (Rat).